A 438-amino-acid polypeptide reads, in one-letter code: sn-glycerol-3-phosphate-binding periplasmic protein UgpB (438 aa).

Residues 1-23 (MKPLRYTASALALGLALMANAQA) form the signal peptide. Sn-glycerol 3-phosphate-binding residues include Tyr65, Glu89, Ser144, Ser270, Gly307, Tyr346, and Arg397.

This sequence belongs to the bacterial solute-binding protein 1 family. The complex is composed of two ATP-binding proteins (UgpC), two transmembrane proteins (UgpA and UgpE) and a solute-binding protein (UgpB).

Its subcellular location is the periplasm. Its function is as follows. Part of the ABC transporter complex UgpBAEC involved in sn-glycerol-3-phosphate (G3P) import. Binds G3P. In Escherichia coli O1:K1 / APEC, this protein is sn-glycerol-3-phosphate-binding periplasmic protein UgpB (ugpB).